Consider the following 417-residue polypeptide: Tryptophan synthase beta chain (417 aa).

Lysine 110 carries the post-translational modification N6-(pyridoxal phosphate)lysine.

This sequence belongs to the TrpB family. In terms of assembly, tetramer of two alpha and two beta chains. Pyridoxal 5'-phosphate is required as a cofactor.

It catalyses the reaction (1S,2R)-1-C-(indol-3-yl)glycerol 3-phosphate + L-serine = D-glyceraldehyde 3-phosphate + L-tryptophan + H2O. Its pathway is amino-acid biosynthesis; L-tryptophan biosynthesis; L-tryptophan from chorismate: step 5/5. The beta subunit is responsible for the synthesis of L-tryptophan from indole and L-serine. The sequence is that of Tryptophan synthase beta chain from Prochlorococcus marinus (strain NATL2A).